A 120-amino-acid chain; its full sequence is Immunoglobulin kappa variable 2-30 (120 aa).

A signal peptide spans methionine 1–glycine 20. Residues aspartate 21–cysteine 43 are framework-1. In terms of domain architecture, Ig-like spans aspartate 21–proline 120. Cysteine 43 and cysteine 113 are oxidised to a cystine. Residues arginine 44–asparagine 59 are complementarity-determining-1. The segment at tryptophan 60–tyrosine 74 is framework-2. A complementarity-determining-2 region spans residues lysine 75–serine 81. The interval glycine 82–cysteine 113 is framework-3. The complementarity-determining-3 stretch occupies residues methionine 114–proline 120.

As to quaternary structure, immunoglobulins are composed of two identical heavy chains and two identical light chains; disulfide-linked.

It is found in the secreted. It localises to the cell membrane. V region of the variable domain of immunoglobulin light chains that participates in the antigen recognition. Immunoglobulins, also known as antibodies, are membrane-bound or secreted glycoproteins produced by B lymphocytes. In the recognition phase of humoral immunity, the membrane-bound immunoglobulins serve as receptors which, upon binding of a specific antigen, trigger the clonal expansion and differentiation of B lymphocytes into immunoglobulins-secreting plasma cells. Secreted immunoglobulins mediate the effector phase of humoral immunity, which results in the elimination of bound antigens. The antigen binding site is formed by the variable domain of one heavy chain, together with that of its associated light chain. Thus, each immunoglobulin has two antigen binding sites with remarkable affinity for a particular antigen. The variable domains are assembled by a process called V-(D)-J rearrangement and can then be subjected to somatic hypermutations which, after exposure to antigen and selection, allow affinity maturation for a particular antigen. The polypeptide is Immunoglobulin kappa variable 2-30 (Homo sapiens (Human)).